The sequence spans 408 residues: 2,3-bisphosphoglycerate-independent phosphoglycerate mutase 1 (408 aa).

It belongs to the BPG-independent phosphoglycerate mutase family. A-PGAM subfamily. Monomer. Requires Mn(2+) as cofactor.

The catalysed reaction is (2R)-2-phosphoglycerate = (2R)-3-phosphoglycerate. The protein operates within carbohydrate degradation; glycolysis; pyruvate from D-glyceraldehyde 3-phosphate: step 3/5. In terms of biological role, catalyzes the interconversion of 2-phosphoglycerate and 3-phosphoglycerate. This chain is 2,3-bisphosphoglycerate-independent phosphoglycerate mutase 1 (apgM1), found in Archaeoglobus fulgidus (strain ATCC 49558 / DSM 4304 / JCM 9628 / NBRC 100126 / VC-16).